Reading from the N-terminus, the 359-residue chain is MSTENTRSVTDLARENVRNLTPYQSARRLGGNGDVWLNANEFPTTVEFQLTQQTLNRYPECQPKAVIENYAQYAGVNPGQVLVSRGADEGIELLIRAFCEPGKEAILYCPPTYGMYSVSSETIGVECRTVPTLENWQLDLRGIADKLDGVKVMFVCSPNNPTGQLINPQDLRTLLEMTRGNAIVVADEAYIEFCPQATLAGWLSEYPHLVVLRTLSKAFALAGLRCGFTLANEEVINLLLKVIAPYPLSTPVADIAAQALTPQGVNAMRERVAQILLERQYLVNALKEIACVEQVFDSETNYILARFTASSSVFKSLWDQGIILRDQNKQPSLSGCLRITVGTREESQRVIDALRAEQV.

At Lys-217 the chain carries N6-(pyridoxal phosphate)lysine.

The protein belongs to the class-II pyridoxal-phosphate-dependent aminotransferase family. Histidinol-phosphate aminotransferase subfamily. Homodimer. It depends on pyridoxal 5'-phosphate as a cofactor.

The enzyme catalyses L-histidinol phosphate + 2-oxoglutarate = 3-(imidazol-4-yl)-2-oxopropyl phosphate + L-glutamate. Its pathway is amino-acid biosynthesis; L-histidine biosynthesis; L-histidine from 5-phospho-alpha-D-ribose 1-diphosphate: step 7/9. This is Histidinol-phosphate aminotransferase from Citrobacter koseri (strain ATCC BAA-895 / CDC 4225-83 / SGSC4696).